A 207-amino-acid chain; its full sequence is Inhibitor of hydrogen peroxide resistance (207 aa).

Residues 163–182 (MNYIHQRTRISRSVVAEVLA) constitute a DNA-binding region (H-T-H motif).

The protein belongs to the IprA family.

Its function is as follows. Involved in oxidative stress resistance. In Escherichia coli O157:H7, this protein is Inhibitor of hydrogen peroxide resistance.